A 152-amino-acid polypeptide reads, in one-letter code: Deoxyuridine 5'-triphosphate nucleotidohydrolase (152 aa).

Substrate is bound by residues Arg-71–Gly-73, Asn-84, Leu-88–Asp-90, and Met-98.

The protein belongs to the dUTPase family. The cofactor is Mg(2+).

The enzyme catalyses dUTP + H2O = dUMP + diphosphate + H(+). Its pathway is pyrimidine metabolism; dUMP biosynthesis; dUMP from dCTP (dUTP route): step 2/2. Functionally, this enzyme is involved in nucleotide metabolism: it produces dUMP, the immediate precursor of thymidine nucleotides and it decreases the intracellular concentration of dUTP so that uracil cannot be incorporated into DNA. The chain is Deoxyuridine 5'-triphosphate nucleotidohydrolase from Shewanella sp. (strain ANA-3).